Reading from the N-terminus, the 70-residue chain is Small ribosomal subunit protein bS21A (70 aa).

The protein belongs to the bacterial ribosomal protein bS21 family.

The protein is Small ribosomal subunit protein bS21A (rpsU1) of Burkholderia mallei (strain ATCC 23344).